A 1040-amino-acid chain; its full sequence is FHF complex subunit HOOK-interacting protein 1A (1040 aa).

Disordered regions lie at residues 555–613 (PQQL…PIDP), 653–746 (SEDM…AAHP), and 769–808 (LMEQ…EDEE). The segment covering 653-664 (SEDMKDSQEEAA) has biased composition (basic and acidic residues). Residues 677 to 690 (VPINNGPLLSTQPE) are compositionally biased toward polar residues. Basic and acidic residues-rich tracts occupy residues 696-719 (EWNR…REPE) and 783-804 (TKEE…KKEL).

The protein belongs to the FHIP family. As to quaternary structure, may be a component of the FTS/Hook/FHIP complex (FHF complex), composed of AKTIP/FTS, FHIP1B, and one or more members of the Hook family of proteins HOOK1, HOOK2, and HOOK3. May interact directly with AKTIP/FTS.

In terms of biological role, probable component of the FTS/Hook/FHIP complex (FHF complex). FHF complex promotes the distribution of AP-4 complex to the perinuclear area of the cell. The sequence is that of FHF complex subunit HOOK-interacting protein 1A from Homo sapiens (Human).